We begin with the raw amino-acid sequence, 251 residues long: Hydroxyacylglutathione hydrolase (251 aa).

The Zn(2+) site is built by His53, His55, Asp57, His58, His110, Asp127, and His165.

It belongs to the metallo-beta-lactamase superfamily. Glyoxalase II family. In terms of assembly, monomer. Zn(2+) is required as a cofactor.

The enzyme catalyses an S-(2-hydroxyacyl)glutathione + H2O = a 2-hydroxy carboxylate + glutathione + H(+). It participates in secondary metabolite metabolism; methylglyoxal degradation; (R)-lactate from methylglyoxal: step 2/2. Its function is as follows. Thiolesterase that catalyzes the hydrolysis of S-D-lactoyl-glutathione to form glutathione and D-lactic acid. This is Hydroxyacylglutathione hydrolase from Salmonella paratyphi C (strain RKS4594).